Here is a 152-residue protein sequence, read N- to C-terminus: Transcriptional regulator MraZ (152 aa).

SpoVT-AbrB domains are found at residues Ala5–Glu52 and Ala81–Ser124.

It belongs to the MraZ family. In terms of assembly, forms oligomers.

The protein localises to the cytoplasm. It is found in the nucleoid. In Shewanella baltica (strain OS223), this protein is Transcriptional regulator MraZ.